A 122-amino-acid polypeptide reads, in one-letter code: Large ribosomal subunit protein bL12 (122 aa).

Residues 94-122 are disordered; that stretch reads GNVKEGLSKEDAEEMKEKLEEAGATVELK. Positions 99-114 are enriched in basic and acidic residues; the sequence is GLSKEDAEEMKEKLEE.

The protein belongs to the bacterial ribosomal protein bL12 family. As to quaternary structure, homodimer. Part of the ribosomal stalk of the 50S ribosomal subunit. Forms a multimeric L10(L12)X complex, where L10 forms an elongated spine to which 2 to 4 L12 dimers bind in a sequential fashion. Binds GTP-bound translation factors.

Forms part of the ribosomal stalk which helps the ribosome interact with GTP-bound translation factors. Is thus essential for accurate translation. In Halanaerobium praevalens, this protein is Large ribosomal subunit protein bL12.